The sequence spans 400 residues: Methylthioribose kinase (400 aa).

ATP is bound by residues Asn44, Lys61, and 115–117; that span reads EDL. Position 233 (Asp233) interacts with substrate. Residue 250–252 coordinates ATP; sequence DPE. Residue Arg340 coordinates substrate.

It belongs to the methylthioribose kinase family. Homodimer.

It carries out the reaction 5-(methylsulfanyl)-D-ribose + ATP = 5-(methylsulfanyl)-alpha-D-ribose 1-phosphate + ADP + H(+). The protein operates within amino-acid biosynthesis; L-methionine biosynthesis via salvage pathway; S-methyl-5-thio-alpha-D-ribose 1-phosphate from S-methyl-5'-thioadenosine (hydrolase route): step 2/2. In terms of biological role, catalyzes the phosphorylation of methylthioribose into methylthioribose-1-phosphate. The protein is Methylthioribose kinase of Geobacillus sp. (strain WCH70).